The primary structure comprises 891 residues: DNA mismatch repair protein MutS (891 aa).

617 to 624 (GPNMSGKS) lines the ATP pocket. Basic and acidic residues predominate over residues 805–827 (REKIEEEEPKTKDTKRGPSEKVK). Residues 805–840 (REKIEEEEPKTKDTKRGPSEKVKNASPTLPRDEKGR) are disordered.

Belongs to the DNA mismatch repair MutS family.

Functionally, this protein is involved in the repair of mismatches in DNA. It is possible that it carries out the mismatch recognition step. This protein has a weak ATPase activity. The sequence is that of DNA mismatch repair protein MutS from Porphyromonas gingivalis (strain ATCC BAA-308 / W83).